A 533-amino-acid polypeptide reads, in one-letter code: Zinc finger protein 26 (533 aa).

The region spanning 14–85 (LSFKDISMEF…NAKISRQSCP (72 aa)) is the KRAB domain. 13 consecutive C2H2-type zinc fingers follow at residues 174 to 196 (CVCS…LRIH), 202 to 224 (YECS…QRVH), 230 to 252 (YSCS…QEIH), 258 to 280 (YGCS…QRSH), 286 to 308 (YECS…QRTH), 314 to 336 (HKCS…IRMH), 342 to 364 (YQCS…QGVH), 370 to 392 (YQCG…LRAH), 398 to 420 (YGCS…RRTH), 426 to 448 (YECS…QRTH), 454 to 476 (YECN…QKTH), 482 to 504 (FKCS…QRVH), and 510 to 532 (WKCS…RKTH).

This sequence belongs to the krueppel C2H2-type zinc-finger protein family.

The protein resides in the nucleus. Its function is as follows. May be involved in transcriptional regulation. This Homo sapiens (Human) protein is Zinc finger protein 26 (ZNF26).